A 793-amino-acid chain; its full sequence is MFSLRKTKLQPVSLHQCRLSSLFRGVLIHAIEVTGTQSQASLQHGLAGKAVLSNAKYLSVLTRFRTSTRFDVWSIHRREAISSISGSILLQARDPAKLNEEIQIAVDEHRCDEAWRLFEQHMQMEGFPRKSVVNNVVVCFAESLDSNWLQKGYSLVEQAYEEGKQNLLEKEPLLYLSLALAKSGMAVPASTILRKLVETEEYPHVSAWSAVLAHMSLAGSGSYLSAELVLEIGYLFHNNRVDPRKKSNAPLLAMKPNTQVLNVALAGCLLFGTTRKAEQLLDMIPKIGVKADANLLVIMAHIYERNGRREELRKLQRHIDEACNLNESQFWQFYNCLLMCHLKFGDLESASKMVLEMLRRGKVARNSLGAAILEFDTADDGRLYTKRVSGKGSEVKEHDNPETRVVSIHSMIPYDEFSRDRKFLKLEAEAKDVLGALLAKLHVQVELITSERGVLQPTEEIYVKLAKAFLESGKMKELAKFLLKAEHEDSPVSSDNSMLINVINACISLGMLDQAHDLLDEMRMAGVRTGSSVYSSLLKAYCNTNQTREVTSLLRDAQKAGIQLDSSCYEALIQSQVIQNDTHGALNVFKEMKEAKILRGGNQKFEKLLKGCEGNAEAGLMSKLLREIREVQSLDAGVHDWNNVIHFFSKKGLMQDAEKALKRMRSLGHSPNAQTFHSMVTGYAAIGSKYTEVTELWGEMKSIAAATSSMKFDQELLDAVLYTFVRGGFFSRANEVVEMMEKKNMFVDKYKYRMLFLKYHKTAYKGKAPKVQSESQLKKREAGLVFKKWLGLS.

The transit peptide at 1–87 (MFSLRKTKLQ…REAISSISGS (87 aa)) directs the protein to the mitochondrion. PPR repeat units follow at residues 257-291 (NTQV…GVKA), 292-322 (DANL…IDEA), 330-364 (FWQF…GKVA), 458-492 (TEEI…DSPV), 495-529 (DNSM…GVRT), 530-564 (GSSV…GIQL), 565-599 (DSSC…KILR), 601-631 (GNQK…IREV), 637-671 (GVHD…GHSP), 672-707 (NAQT…AAAT), and 713-747 (DQEL…NMFV).

It belongs to the PPR family. P subfamily.

The protein resides in the mitochondrion. This Arabidopsis thaliana (Mouse-ear cress) protein is Pentatricopeptide repeat-containing protein At1g03100, mitochondrial.